Consider the following 337-residue polypeptide: Viral cathepsin (337 aa).

The first 16 residues, 1 to 16 (MNKILILLLLVSAVLT), serve as a signal peptide directing secretion. Residues 17–126 (SHDQVVAVTI…VVDGPGQRQR (110 aa)) constitute a propeptide, activation peptide. 3 disulfides stabilise this stretch: Cys-147–Cys-188, Cys-181–Cys-221, and Cys-276–Cys-324. Cys-150 is an active-site residue. Catalysis depends on residues His-283 and Asn-303.

It belongs to the peptidase C1 family. Synthesized as an inactive proenzyme and activated by proteolytic removal of the inhibitory propeptide.

It carries out the reaction Endopeptidase of broad specificity, hydrolyzing substrates of both cathepsin L and cathepsin B.. Cysteine protease that plays an essential role in host liquefaction to facilitate horizontal transmission of the virus. May participate in the degradation of foreign protein expressed by the baculovirus system. In Mamestra configurata (bertha armyworm), this protein is Viral cathepsin (VCATH).